Here is a 418-residue protein sequence, read N- to C-terminus: ATP-dependent Clp protease ATP-binding subunit ClpX (418 aa).

The 54-residue stretch at 1 to 54 (MTRKDDESDQFFCSFCGKNQKEVKKLIAGPSVYICNECVSLCEEIIEDEDKESL) folds into the ClpX-type ZB domain. Residues Cys-13, Cys-16, Cys-35, and Cys-38 each coordinate Zn(2+). Residue 120–127 (PTGCGKTL) participates in ATP binding.

The protein belongs to the ClpX chaperone family. Component of the ClpX-ClpP complex. Forms a hexameric ring that, in the presence of ATP, binds to fourteen ClpP subunits assembled into a disk-like structure with a central cavity, resembling the structure of eukaryotic proteasomes.

In terms of biological role, ATP-dependent specificity component of the Clp protease. It directs the protease to specific substrates. Can perform chaperone functions in the absence of ClpP. The chain is ATP-dependent Clp protease ATP-binding subunit ClpX from Desulforapulum autotrophicum (strain ATCC 43914 / DSM 3382 / VKM B-1955 / HRM2) (Desulfobacterium autotrophicum).